Here is a 67-residue protein sequence, read N- to C-terminus: DNA-directed RNA polymerase subunit omega (67 aa).

It belongs to the RNA polymerase subunit omega family. In terms of assembly, the RNAP catalytic core consists of 2 alpha, 1 beta, 1 beta' and 1 omega subunit. When a sigma factor is associated with the core the holoenzyme is formed, which can initiate transcription.

The enzyme catalyses RNA(n) + a ribonucleoside 5'-triphosphate = RNA(n+1) + diphosphate. Its function is as follows. Promotes RNA polymerase assembly. Latches the N- and C-terminal regions of the beta' subunit thereby facilitating its interaction with the beta and alpha subunits. The polypeptide is DNA-directed RNA polymerase subunit omega (Burkholderia ambifaria (strain MC40-6)).